The following is a 174-amino-acid chain: Large ribosomal subunit protein uL10 (174 aa).

It belongs to the universal ribosomal protein uL10 family. Part of the ribosomal stalk of the 50S ribosomal subunit. The N-terminus interacts with L11 and the large rRNA to form the base of the stalk. The C-terminus forms an elongated spine to which L12 dimers bind in a sequential fashion forming a multimeric L10(L12)X complex.

Forms part of the ribosomal stalk, playing a central role in the interaction of the ribosome with GTP-bound translation factors. The sequence is that of Large ribosomal subunit protein uL10 from Anaeromyxobacter sp. (strain K).